Consider the following 147-residue polypeptide: 3-dehydroquinate dehydratase 1 (147 aa).

Residue tyrosine 23 is the Proton acceptor of the active site. 3 residues coordinate substrate: asparagine 75, histidine 81, and aspartate 88. Histidine 101 acts as the Proton donor in catalysis. Substrate is bound by residues 102–103 and arginine 112; that span reads LS.

This sequence belongs to the type-II 3-dehydroquinase family. As to quaternary structure, homododecamer.

The enzyme catalyses 3-dehydroquinate = 3-dehydroshikimate + H2O. Its pathway is metabolic intermediate biosynthesis; chorismate biosynthesis; chorismate from D-erythrose 4-phosphate and phosphoenolpyruvate: step 3/7. Functionally, catalyzes a trans-dehydration via an enolate intermediate. The sequence is that of 3-dehydroquinate dehydratase 1 (aroQ1) from Pseudomonas aeruginosa (strain ATCC 15692 / DSM 22644 / CIP 104116 / JCM 14847 / LMG 12228 / 1C / PRS 101 / PAO1).